The primary structure comprises 1357 residues: DNA-directed RNA polymerase subunit beta (1357 aa).

Belongs to the RNA polymerase beta chain family. In terms of assembly, the RNAP catalytic core consists of 2 alpha, 1 beta, 1 beta' and 1 omega subunit. When a sigma factor is associated with the core the holoenzyme is formed, which can initiate transcription.

The enzyme catalyses RNA(n) + a ribonucleoside 5'-triphosphate = RNA(n+1) + diphosphate. Functionally, DNA-dependent RNA polymerase catalyzes the transcription of DNA into RNA using the four ribonucleoside triphosphates as substrates. The chain is DNA-directed RNA polymerase subunit beta from Pseudomonas putida (Arthrobacter siderocapsulatus).